A 554-amino-acid chain; its full sequence is Esterase cest-33 (554 aa).

A lipid anchor (N-myristoyl glycine) is attached at glycine 2. A disulfide bond links cysteine 76 and cysteine 98. Serine 208 (acyl-ester intermediate) is an active-site residue. Residues glutamate 331 and histidine 446 each act as charge relay system in the active site.

The protein belongs to the type-B carboxylesterase/lipase family.

It localises to the cytoplasm. It is found in the cell membrane. The enzyme catalyses a carboxylic ester + H2O = an alcohol + a carboxylate + H(+). This is Esterase cest-33 from Caenorhabditis elegans.